The sequence spans 102 residues: MQKIRKGDKVVMLAGKDKGRTGEVVQVMPKEDRAVVRGVNVVKRHQRQTQTQEAGIINKEAPVHLSNVAIIDKDGKPTRVGFKVVDGKKVRVAKRSGEVIDG.

Belongs to the universal ribosomal protein uL24 family. As to quaternary structure, part of the 50S ribosomal subunit.

In terms of biological role, one of two assembly initiator proteins, it binds directly to the 5'-end of the 23S rRNA, where it nucleates assembly of the 50S subunit. Functionally, one of the proteins that surrounds the polypeptide exit tunnel on the outside of the subunit. This Rhizobium johnstonii (strain DSM 114642 / LMG 32736 / 3841) (Rhizobium leguminosarum bv. viciae) protein is Large ribosomal subunit protein uL24.